Here is a 248-residue protein sequence, read N- to C-terminus: Ubiquinone/menaquinone biosynthesis C-methyltransferase UbiE (248 aa).

Residues Ser68, Asp92, and 120 to 121 (NA) contribute to the S-adenosyl-L-methionine site.

Belongs to the class I-like SAM-binding methyltransferase superfamily. MenG/UbiE family.

The catalysed reaction is a 2-demethylmenaquinol + S-adenosyl-L-methionine = a menaquinol + S-adenosyl-L-homocysteine + H(+). It carries out the reaction a 2-methoxy-6-(all-trans-polyprenyl)benzene-1,4-diol + S-adenosyl-L-methionine = a 5-methoxy-2-methyl-3-(all-trans-polyprenyl)benzene-1,4-diol + S-adenosyl-L-homocysteine + H(+). The protein operates within quinol/quinone metabolism; menaquinone biosynthesis; menaquinol from 1,4-dihydroxy-2-naphthoate: step 2/2. It functions in the pathway cofactor biosynthesis; ubiquinone biosynthesis. Its function is as follows. Methyltransferase required for the conversion of demethylmenaquinol (DMKH2) to menaquinol (MKH2) and the conversion of 2-polyprenyl-6-methoxy-1,4-benzoquinol (DDMQH2) to 2-polyprenyl-3-methyl-6-methoxy-1,4-benzoquinol (DMQH2). This chain is Ubiquinone/menaquinone biosynthesis C-methyltransferase UbiE, found in Rickettsia typhi (strain ATCC VR-144 / Wilmington).